The following is a 243-amino-acid chain: tRNA (guanine-N(1)-)-methyltransferase (243 aa).

S-adenosyl-L-methionine contacts are provided by residues Gly123 and 143 to 148; that span reads LGDFVM.

It belongs to the RNA methyltransferase TrmD family. Homodimer.

It is found in the cytoplasm. It catalyses the reaction guanosine(37) in tRNA + S-adenosyl-L-methionine = N(1)-methylguanosine(37) in tRNA + S-adenosyl-L-homocysteine + H(+). Its function is as follows. Specifically methylates guanosine-37 in various tRNAs. This Ruegeria pomeroyi (strain ATCC 700808 / DSM 15171 / DSS-3) (Silicibacter pomeroyi) protein is tRNA (guanine-N(1)-)-methyltransferase.